The sequence spans 99 residues: MTKTVSTSKKPRKQHSPEFRSEALKLAERIGVTAAARELSLYESQLYNWRSKQQNQQTSSERELEMSTEIARLKRQLAERDEELAILQKAATYFAKRLK.

The disordered stretch occupies residues 1–21 (MTKTVSTSKKPRKQHSPEFRS).

This sequence belongs to the transposase 8 family.

Involved in the transposition of the insertion sequence IS3. This chain is Transposase InsE for insertion sequence IS3A (insE1), found in Escherichia coli (strain K12).